A 117-amino-acid polypeptide reads, in one-letter code: Membrane-anchored ubiquitin-fold protein 1 (117 aa).

The Ubiquitin-like domain maps to 8–74 (LEIKFRLTDG…LENSKTVKDY (67 aa)). Residue cysteine 112 is the site of S-palmitoyl cysteine attachment. Cysteine 114 is subject to Cysteine methyl ester. Cysteine 114 carries S-farnesyl cysteine lipidation. Residues 115–117 (SVM) constitute a propeptide, removed in mature form.

Its subcellular location is the cell membrane. May serve as docking site to facilitate the association of other proteins to the plasma membrane. The polypeptide is Membrane-anchored ubiquitin-fold protein 1 (MUB1) (Arabidopsis thaliana (Mouse-ear cress)).